A 661-amino-acid chain; its full sequence is uncharacterized protein (661 aa).

Residues 25-52 form a disordered region; that stretch reads LLPSEPPVGDMNNEDSDTNTSITQSPTN. Residues 42-52 are compositionally biased toward polar residues; that stretch reads TNTSITQSPTN. The 52-residue stretch at 246-297 folds into the SANT domain; it reads SMPDIWNEEQHSIFVQQFILHGKKFGKIAEAVPGKNSKECVLHYYLTKRTTD. Disordered regions lie at residues 306 to 329, 478 to 499, 548 to 570, and 604 to 633; these read TKTKGRRRKKLLPSQRGGKKKSKG, YYEPKLEQHSSSKRNSISTRKE, PMKMPLTPRRASTGPRPRPTFQL, and RIDELSVEDQEHTTHSSHTTSDINAFPNSQ. Residues 308–328 are compositionally biased toward basic residues; the sequence is TKGRRRKKLLPSQRGGKKKSK. The span at 478–487 shows a compositional bias: basic and acidic residues; it reads YYEPKLEQHS. The span at 604–617 shows a compositional bias: basic and acidic residues; that stretch reads RIDELSVEDQEHTT.

Its subcellular location is the nucleus. This is an uncharacterized protein from Schizosaccharomyces pombe (strain 972 / ATCC 24843) (Fission yeast).